Consider the following 387-residue polypeptide: Protein-glutamate methylesterase/protein-glutamine glutaminase 1 (387 aa).

The region spanning 18–136 (RVMVVDDSAV…EISGGTDFRH (119 aa)) is the Response regulatory domain. Asp-69 is modified (4-aspartylphosphate). The CheB-type methylesterase domain occupies 190–387 (PAAEERPDII…AYVLRSANKR (198 aa)). Residues Ser-204, His-233, and Asp-329 contribute to the active site.

The protein belongs to the CheB family. Post-translationally, phosphorylated by CheA. Phosphorylation of the N-terminal regulatory domain activates the methylesterase activity.

The protein localises to the cytoplasm. It catalyses the reaction [protein]-L-glutamate 5-O-methyl ester + H2O = L-glutamyl-[protein] + methanol + H(+). It carries out the reaction L-glutaminyl-[protein] + H2O = L-glutamyl-[protein] + NH4(+). Involved in chemotaxis. Part of a chemotaxis signal transduction system that modulates chemotaxis in response to various stimuli. Catalyzes the demethylation of specific methylglutamate residues introduced into the chemoreceptors (methyl-accepting chemotaxis proteins or MCP) by CheR. Also mediates the irreversible deamidation of specific glutamine residues to glutamic acid. This is Protein-glutamate methylesterase/protein-glutamine glutaminase 1 from Rhodospirillum rubrum (strain ATCC 11170 / ATH 1.1.1 / DSM 467 / LMG 4362 / NCIMB 8255 / S1).